A 221-amino-acid chain; its full sequence is Ribosomal RNA small subunit methyltransferase G (221 aa).

S-adenosyl-L-methionine is bound by residues glycine 83, phenylalanine 88, 132-133, and arginine 146; that span reads LE.

It belongs to the methyltransferase superfamily. RNA methyltransferase RsmG family.

It localises to the cytoplasm. It catalyses the reaction guanosine(527) in 16S rRNA + S-adenosyl-L-methionine = N(7)-methylguanosine(527) in 16S rRNA + S-adenosyl-L-homocysteine. In terms of biological role, specifically methylates the N7 position of guanine in position 527 of 16S rRNA. This is Ribosomal RNA small subunit methyltransferase G from Zymomonas mobilis subsp. mobilis (strain ATCC 31821 / ZM4 / CP4).